The following is a 560-amino-acid chain: Protein yellow (560 aa).

Residues methionine 1–alanine 30 form the signal peptide. N-linked (GlcNAc...) asparagine glycosylation is found at asparagine 153 and asparagine 224. A disordered region spans residues glutamine 452–valine 492. The span at serine 471 to alanine 480 shows a compositional bias: low complexity.

This sequence belongs to the major royal jelly protein family.

It is found in the secreted. In terms of biological role, controls the pigmentation pattern of the adult cuticle and larval mouth parts. The sequence is that of Protein yellow (y) from Drosophila pseudoobscura pseudoobscura (Fruit fly).